Here is a 170-residue protein sequence, read N- to C-terminus: Probable inactive uracil-DNA glycosylase, mitochondrial (170 aa).

Residues 1–53 constitute a mitochondrion transit peptide; it reads MALSTPKTLMDFFQPAKRLKASPSSSSSFPAVSVAGRSRDLGSVANSPPRVTV.

The protein belongs to the uracil-DNA glycosylase (UDG) superfamily. UNG family.

The protein resides in the mitochondrion. In terms of biological role, probable inactive paralog of AtUNG (AC Q9LIH6) generated by a gene duplication event and subsequently disrupted by at least two transposon insertions. This chain is Probable inactive uracil-DNA glycosylase, mitochondrial, found in Arabidopsis thaliana (Mouse-ear cress).